We begin with the raw amino-acid sequence, 85 residues long: U4-theraphotoxin-Hhn1g (85 aa).

Residues 1–22 (MKVTLIAILTCAAVLVLHTTAA) form the signal peptide. Positions 23-48 (EELEAESQLMEVGMPDTELAAVDEER) are excised as a propeptide. 3 disulfide bridges follow: C52–C66, C56–C77, and C71–C82.

Belongs to the neurotoxin 12 (Hwtx-2) family. 02 (Hwtx-2) subfamily. Expressed by the venom gland.

The protein resides in the secreted. Functionally, postsynaptic neurotoxin. This chain is U4-theraphotoxin-Hhn1g, found in Cyriopagopus hainanus (Chinese bird spider).